The following is a 201-amino-acid chain: Phosphoheptose isomerase 2 (201 aa).

Residues 39–198 (VIKAYKNGNK…EEELFGKGFS (160 aa)) form the SIS domain. 54–56 (NGG) contributes to the substrate binding site. 2 residues coordinate Zn(2+): H63 and E67. Substrate is bound by residues E67, 96–97 (ND), 122–124 (STS), S127, and Q174. The Zn(2+) site is built by Q174 and H182.

It belongs to the SIS family. GmhA subfamily. In terms of assembly, homotetramer. The cofactor is Zn(2+).

The protein resides in the cytoplasm. The enzyme catalyses 2 D-sedoheptulose 7-phosphate = D-glycero-alpha-D-manno-heptose 7-phosphate + D-glycero-beta-D-manno-heptose 7-phosphate. The protein operates within carbohydrate biosynthesis; D-glycero-D-manno-heptose 7-phosphate biosynthesis; D-glycero-alpha-D-manno-heptose 7-phosphate and D-glycero-beta-D-manno-heptose 7-phosphate from sedoheptulose 7-phosphate: step 1/1. It participates in capsule biogenesis; capsule polysaccharide biosynthesis. Its function is as follows. Catalyzes the isomerization of sedoheptulose 7-phosphate in D-glycero-D-manno-heptose 7-phosphate. No activity with L-galacto-heptulose, L-galacto-heptulose 7-phosphate or D-manno-heptulose. This Campylobacter jejuni subsp. jejuni serotype O:2 (strain ATCC 700819 / NCTC 11168) protein is Phosphoheptose isomerase 2.